We begin with the raw amino-acid sequence, 718 residues long: U-box domain-containing protein 5 (718 aa).

The 75-residue stretch at 218 to 292 (TLPEKFKCTL…SEWCAKNGLD (75 aa)) folds into the U-box domain. 3 ARM repeats span residues 493-532 (PHGPSKITSSGSLSSLLKIVESQAEHLQEQAMITLKNLSS), 534-571 (MEICLEMVSLDFIQKLTSFLQQKVFCKHSIIILKNLCS), and 573-613 (EKGR…QLCV). A disordered region spans residues 662-704 (KEEEEEVSSRPEGRTTASPTSQVVTPVTHPEPVKITPSPKKSG). Residues 676 to 686 (TTASPTSQVVT) are compositionally biased toward polar residues.

It catalyses the reaction S-ubiquitinyl-[E2 ubiquitin-conjugating enzyme]-L-cysteine + [acceptor protein]-L-lysine = [E2 ubiquitin-conjugating enzyme]-L-cysteine + N(6)-ubiquitinyl-[acceptor protein]-L-lysine.. Its pathway is protein modification; protein ubiquitination. In terms of biological role, functions as an E3 ubiquitin ligase. The protein is U-box domain-containing protein 5 (PUB5) of Arabidopsis thaliana (Mouse-ear cress).